The sequence spans 207 residues: Small ribosomal subunit protein bS6c (207 aa).

A chloroplast-targeting transit peptide spans 1–59 (MASSLCVSNSTICPLPNVSSQPLLSFSHSLRPFISKSKPMCASIQKRDGSQFVVKSQAL). The interval 69–99 (GFGSDDDPTSPSGSGVSTALEDKPEPQCPPG) is disordered. Over residues 77–86 (TSPSGSGVST) the composition is skewed to low complexity.

This sequence belongs to the bacterial ribosomal protein bS6 family. In terms of assembly, part of the 30S ribosomal subunit.

The protein localises to the plastid. Its subcellular location is the chloroplast. Functionally, binds together with bS18 to 16S ribosomal RNA. This chain is Small ribosomal subunit protein bS6c (RPS6), found in Arabidopsis thaliana (Mouse-ear cress).